The following is a 465-amino-acid chain: Sodium-dependent phosphate transport protein 1 (465 aa).

2 N-linked (GlcNAc...) asparagine glycosylation sites follow: asparagine 47 and asparagine 56. The next 10 helical transmembrane spans lie at 79 to 99, 109 to 129, 171 to 191, 198 to 218, 255 to 275, 304 to 324, 337 to 357, 363 to 383, 399 to 419, and 428 to 448; these read GIIF…VGYI, IGFA…AAAV, MSLS…GIIC, MVFY…FVLY, AMIK…YLWT, LPYL…DFLM, LFTA…LYLS, TITF…GALI, VTTL…GLFL, and FKIF…YLIF.

The protein belongs to the major facilitator superfamily. Sodium/anion cotransporter family. As to quaternary structure, interacts with PDZK1. Kidney cortex and liver.

The protein resides in the apical cell membrane. The catalysed reaction is 3 Na(+)(out) + phosphate(out) = 3 Na(+)(in) + phosphate(in). The enzyme catalyses urate(out) = urate(in). Important for the resorption of phosphate by the kidney. May be involved in actively transporting phosphate into cells via Na(+) cotransport in the renal brush border membrane. Plays a role in urate transport in the kidney. This chain is Sodium-dependent phosphate transport protein 1 (SLC17A1), found in Oryctolagus cuniculus (Rabbit).